The primary structure comprises 336 residues: Phenylalanine--tRNA ligase alpha subunit (336 aa).

E259 contacts Mg(2+).

This sequence belongs to the class-II aminoacyl-tRNA synthetase family. Phe-tRNA synthetase alpha subunit type 1 subfamily. In terms of assembly, tetramer of two alpha and two beta subunits. It depends on Mg(2+) as a cofactor.

It is found in the cytoplasm. The enzyme catalyses tRNA(Phe) + L-phenylalanine + ATP = L-phenylalanyl-tRNA(Phe) + AMP + diphosphate + H(+). This Tropheryma whipplei (strain TW08/27) (Whipple's bacillus) protein is Phenylalanine--tRNA ligase alpha subunit.